A 704-amino-acid chain; its full sequence is MARLVALDRVRNIGIMAHIDAGKTTTTERILYYTGRLHRMGEVHDGGATMDWMEQEKERGITITSAATTCFWTPKFGNYQGINHRINIIDTPGHVDFTVEVERSLRVLDGAVALFCAVGGVEPQSETVWRQANKYGVPRIAYINKMDRTGANFFDAVKSIRERLGANPVPLQIPIGEGEMFAGFVDLIRMKGIIYDKEDGSTYQEVEIPHDLQNEAKAWRINMLEAVSEHDDTLLEKYLNGEDITDEEVRKVLRQATLQVTIIPILCGSSFKNKGVQFMLDAVIEYLASPVDVPAVEGHHPRTEEPISRKPTDEEPFAALAFKIATDPFVGKLTFFRVYSGVLKAGSYVLNTITGKKERVGRVLQMHSNKREDIEAVYCGDIAAAVGLKDVKTGDTLCDENNPVVLEKMVFPEPVIQIAIEPKTKSDSDKLGMSLAKLAEEDPTFKVKTDEETGQTLIAGMGELHLEILVDRLRREFKVDANVGKPQVAYRETIRKSVEFEGKFVRQSGGKGQFGLVNLKVEPLEEGKGYEFVDAIKGGVIPREYIPAVNAGIQEAMKGGVVAGFPMQDVRVTLFDGKYHEVDSSEMAFKIAGSIGFKGAAKKADPVLLEPIMKVEVVTPEEYLGDVMGDLSSRRGHIEGMGQRAGAQFVAAKVPLSSMFGYSTDLRSMSQGRANYSMEFECYREVPRNIAESLQEKRTSKDAE.

One can recognise a tr-type G domain in the interval 8–291 (DRVRNIGIMA…AVIEYLASPV (284 aa)). GTP is bound by residues 17–24 (AHIDAGKT), 90–94 (DTPGH), and 144–147 (NKMD).

Belongs to the TRAFAC class translation factor GTPase superfamily. Classic translation factor GTPase family. EF-G/EF-2 subfamily.

The protein resides in the cytoplasm. In terms of biological role, catalyzes the GTP-dependent ribosomal translocation step during translation elongation. During this step, the ribosome changes from the pre-translocational (PRE) to the post-translocational (POST) state as the newly formed A-site-bound peptidyl-tRNA and P-site-bound deacylated tRNA move to the P and E sites, respectively. Catalyzes the coordinated movement of the two tRNA molecules, the mRNA and conformational changes in the ribosome. This chain is Elongation factor G, found in Chlorobium chlorochromatii (strain CaD3).